A 114-amino-acid chain; its full sequence is Ferritin-like protein (114 aa).

3 residues coordinate Fe cation: glutamate 29, glutamate 59, and histidine 62. The segment at 86-114 is cargo-loading peptide; sequence FTDKPITEIEEETSGGSENTGGDLGIRKL. The interval 94-114 is disordered; the sequence is IEEETSGGSENTGGDLGIRKL. The segment covering 103–114 has biased composition (gly residues); that stretch reads ENTGGDLGIRKL.

Belongs to the ferritin-like superfamily. As to quaternary structure, probably forms a decamer which binds to the pentameric axis of the interior of the protein shell; as the Flp cargo protein is flexible, packing into the shell is not rigid. 3, 4 or 5 cargo decamers bind inside the encapulin nanocompartment. It depends on Fe cation as a cofactor.

Its subcellular location is the encapsulin nanocompartment. Cargo protein of a type 1 encapsulin nanocompartment. A ferritin-like protein that probably stores iron in the encapsulin nanocompartment. This chain is Ferritin-like protein, found in Thermotoga maritima (strain ATCC 43589 / DSM 3109 / JCM 10099 / NBRC 100826 / MSB8).